Reading from the N-terminus, the 984-residue chain is Ubiquitin conjugation factor E4 ufd-2 (984 aa).

The U-box domain maps to 909-982 (DVPEEFKDPI…QEWICQKRNS (74 aa)).

It belongs to the ubiquitin conjugation factor E4 family. Forms a complex composed of deubiquitinating enzyme atx-3, E4 ubiquitin-protein ligase ufd-2 and cdc-48.1; within the complex interacts with atx-3 and cdc-48.1 (via DDDLYN motif). Forms a complex composed of cdc-48.1, myosin chaperone unc-45, ubiquitin-protein ligases ufd-2 and chn-1; the complex targets myosin chaperone unc-45 for proteasomal degradation; within the complex interacts with cdc-48.1 (via DDDLYN motif), chn-1 and unc-45. Forms a complex composed of unc-45 and myosin heavy chain B unc-54; the complex targets unfolded unc-54 for proteasomal degradation; within the complex interacts with unc-45 (via TPR domain) and unc-54. Interacts with cdc-48.2 (via DDDLYN motif). In terms of tissue distribution, expressed in the germline (at protein level).

The protein resides in the cytoplasm. The protein localises to the nucleus membrane. Its subcellular location is the nucleus. It localises to the nucleolus. The catalysed reaction is S-ubiquitinyl-[E2 ubiquitin-conjugating enzyme]-L-cysteine + [acceptor protein]-L-lysine = [E2 ubiquitin-conjugating enzyme]-L-cysteine + N(6)-ubiquitinyl-[acceptor protein]-L-lysine.. It participates in protein modification; protein ubiquitination. Acts as an E4 ubiquitin ligase mediating the assembly of polyubiquitin chains on substrates ubiquitinated by another E3 ubiquitin ligase. The elongation of preexisting ubiquitin chains preferentially targets ubiquitin 'Lys-29' and 'Lys-48' residues. Also functions as an E3 ligase in conjunction with specific E1 and E2 ligases. Probably by regulating protein ubiquitination at DNA damage repair sites, coordinates DNA double-strand-break repair and apoptosis in the germline. Required for germline apoptosis in response to DNA damage downstream of cep-1. Involved in the resolution of DNA-repair sites by promoting the release of rad-51 from DNA damage foci. In association with protein-ligase chn-1, acts as an E3/E4 ligase to poly-ubiquitinate lysine residues in the UCS domain of myosin chaperone unc-45. By targeting myosin chaperone unc-45 for proteasomal degradation, regulates myosin assembly in body wall muscles in association with cdc-48.1 and chn-1. However, in a contrasting study, acts as an E3 ligase, independently of chn-1, to poly-ubiquitinate unc-45 without promoting unc-45 proteasomal degradation. Instead, uses unc-45 as an adapter protein to recruit and poly-ubiquitinate unfolded myosin heavy chain B unc-54. The polypeptide is Ubiquitin conjugation factor E4 ufd-2 (Caenorhabditis elegans).